We begin with the raw amino-acid sequence, 532 residues long: Probable cytochrome c oxidase subunit 1 (532 aa).

8 helical membrane-spanning segments follow: residues 33–53 (IMYIIFAVFAGIVGGLFSLLF), 74–94 (VLITAHAVIMVFFMIMPALFG), 95–115 (GFGNYFVPLLIGAPDMAFPRL), 118–138 (ISFWLLVPAFLLLMGSAFVDG), 163–183 (MAIFSLHLTGLSSILGSINLI), 200–220 (PLFVWSILVTAFLIILAMPVL), 252–272 (LFWFFGHPEVYIVILPGFGIV), and 284–304 (IFGYQGMIGAMVIIGFVGFIV). Histidine 79 lines the Fe(II)-heme a pocket. Residues histidine 258 and tyrosine 262 each contribute to the Cu cation site. Residues histidine 307 and histidine 308 each contribute to the Cu cation site. 2 consecutive transmembrane segments (helical) span residues 318-338 (ALIYFTAGTMIIAVPTGIKIF) and 355-375 (MLFSIGFIILFTIGGVTGIIL). Histidine 393 is a heme a3 binding site. The next 3 helical transmembrane spans lie at 394 to 414 (FHYTMSLGALFTAFAGFYYWF), 431 to 451 (FWITFIGVNLTFFPQHFLGLA), and 473 to 493 (IGAGISMFAALYFVFIVFYTL). Histidine 395 is a binding site for Fe(II)-heme a.

It belongs to the heme-copper respiratory oxidase family.

Its subcellular location is the cell membrane. The catalysed reaction is 4 Fe(II)-[cytochrome c] + O2 + 8 H(+)(in) = 4 Fe(III)-[cytochrome c] + 2 H2O + 4 H(+)(out). It functions in the pathway energy metabolism; oxidative phosphorylation. Functionally, cytochrome c oxidase is the component of the respiratory chain that catalyzes the reduction of oxygen to water. Subunits 1-3 form the functional core of the enzyme complex. CO I is the catalytic subunit of the enzyme. Electrons originating in cytochrome c are transferred via the copper A center of subunit 2 and heme A of subunit 1 to the bimetallic center formed by heme A3 and copper B. This Rickettsia conorii (strain ATCC VR-613 / Malish 7) protein is Probable cytochrome c oxidase subunit 1 (ctaD).